A 108-amino-acid polypeptide reads, in one-letter code: CRISPR-associated endoribonuclease Cas2 (108 aa).

Position 15 (Asp15) interacts with Mg(2+).

The protein belongs to the CRISPR-associated endoribonuclease Cas2 protein family. Homodimer, forms a heterotetramer with a Cas1 homodimer. Requires Mg(2+) as cofactor.

CRISPR (clustered regularly interspaced short palindromic repeat), is an adaptive immune system that provides protection against mobile genetic elements (viruses, transposable elements and conjugative plasmids). CRISPR clusters contain sequences complementary to antecedent mobile elements and target invading nucleic acids. CRISPR clusters are transcribed and processed into CRISPR RNA (crRNA). Functions as a ssRNA-specific endoribonuclease. Involved in the integration of spacer DNA into the CRISPR cassette. In Paracidovorax avenae (strain ATCC 19860 / DSM 7227 / CCUG 15838 / JCM 20985 / LMG 2117 / NCPPB 1011) (Acidovorax avenae), this protein is CRISPR-associated endoribonuclease Cas2.